The following is a 142-amino-acid chain: Large ribosomal subunit protein uL11 (142 aa).

Belongs to the universal ribosomal protein uL11 family. Part of the ribosomal stalk of the 50S ribosomal subunit. Interacts with L10 and the large rRNA to form the base of the stalk. L10 forms an elongated spine to which L12 dimers bind in a sequential fashion forming a multimeric L10(L12)X complex. In terms of processing, one or more lysine residues are methylated.

Its function is as follows. Forms part of the ribosomal stalk which helps the ribosome interact with GTP-bound translation factors. In Shewanella baltica (strain OS223), this protein is Large ribosomal subunit protein uL11.